Here is a 183-residue protein sequence, read N- to C-terminus: ATP-dependent protease subunit HslV (183 aa).

Threonine 13 is an active-site residue. Residues glycine 168, cysteine 171, and threonine 174 each contribute to the Na(+) site.

It belongs to the peptidase T1B family. HslV subfamily. As to quaternary structure, a double ring-shaped homohexamer of HslV is capped on each side by a ring-shaped HslU homohexamer. The assembly of the HslU/HslV complex is dependent on binding of ATP.

The protein resides in the cytoplasm. The enzyme catalyses ATP-dependent cleavage of peptide bonds with broad specificity.. Allosterically activated by HslU binding. Its function is as follows. Protease subunit of a proteasome-like degradation complex believed to be a general protein degrading machinery. This Stenotrophomonas maltophilia (strain R551-3) protein is ATP-dependent protease subunit HslV.